The following is a 443-amino-acid chain: Transcription factor E2F2 (443 aa).

The interval 1-22 is disordered; the sequence is MLRAPRTLAPATAQPTKSLPAL. The segment at 67 to 107 is cyclin A/CDK2 binding; sequence ATPHGPEGQIVRCAPAGRLPAKRKLDLEGIGRPTVPEFRTP. A DNA-binding region spans residues 109 to 198; sequence GKCIRVDGLP…KNNIQWVGRE (90 aa). A leucine-zipper region spans residues 157-178; sequence LNWAAEVLDVQKRRIYDITNVL. The DEF box motif lies at 162–198; it reads EVLDVQKRRIYDITNVLEGIQLIRKKSKNNIQWVGRE. The dimerization stretch occupies residues 199 to 291; that stretch reads LFEDPTRPSR…PDRAEENLQI (93 aa). The interval 306 to 341 is disordered; that stretch reads PEEGQEPDSPAKEALPSTSALSPIPDCAQPGCSTDS. The segment at 361–443 is transactivation; it reads PPPPLPPAPS…SYDLGDLLIN (83 aa). A retinoblastoma protein binding region spans residues 416–433; the sequence is DEYLWGMDEGEGISDLFD.

Belongs to the E2F/DP family. Component of the DRTF1/E2F transcription factor complex. Forms heterodimers with DP family members. The E2F2 complex binds specifically hypophosphorylated retinoblastoma protein RB1. During the cell cycle, RB1 becomes phosphorylated in mid-to-late G1 phase, detaches from the DRTF1/E2F complex, rendering E2F transcriptionally active. Viral oncoproteins, notably E1A, T-antigen and HPV E7, are capable of sequestering RB protein, thus releasing the active complex. Binds EAPP. Phosphorylated by CDK2 and cyclin A-CDK2 in the S-phase.

It is found in the nucleus. Transcription activator that binds DNA cooperatively with DP proteins through the E2 recognition site, 5'-TTTC[CG]CGC-3' found in the promoter region of a number of genes whose products are involved in cell cycle regulation or in DNA replication. The DRTF1/E2F complex functions in the control of cell-cycle progression from g1 to s phase. E2F2 binds specifically to RB1 in a cell-cycle dependent manner. The sequence is that of Transcription factor E2F2 (E2f2) from Mus musculus (Mouse).